The following is a 490-amino-acid chain: Selenium-binding protein 1 (490 aa).

N-acetylalanine is present on A2. Selenite is bound by residues C21 and C22.

This sequence belongs to the selenium-binding protein family. As to quaternary structure, interacts with GRXS14 and GRXS16. Interacts with DALL3. In terms of tissue distribution, expressed in seedlings, roots, leaves, stems and flowers.

In terms of biological role, binds cadmium and mediates lower sensitivity to stress requiring glutathione (GSH) for tolerance (e.g. cadmium, selenate, and hydrogen peroxide excess). Probably helps to detoxify cadmium potentially through direct binding. Binds selenium, cadmium, zinc and nickel in vitro. The chain is Selenium-binding protein 1 from Arabidopsis thaliana (Mouse-ear cress).